Reading from the N-terminus, the 271-residue chain is 4-hydroxy-tetrahydrodipicolinate reductase (271 aa).

NAD(+) is bound by residues 10 to 15, glutamate 36, 100 to 102, and 124 to 127; these read GAGGRM, GTT, and SGNM. Histidine 157 acts as the Proton donor/acceptor in catalysis. Residue histidine 158 participates in (S)-2,3,4,5-tetrahydrodipicolinate binding. The active-site Proton donor is the lysine 161. 167-168 lines the (S)-2,3,4,5-tetrahydrodipicolinate pocket; sequence GT.

This sequence belongs to the DapB family.

Its subcellular location is the cytoplasm. It catalyses the reaction (S)-2,3,4,5-tetrahydrodipicolinate + NAD(+) + H2O = (2S,4S)-4-hydroxy-2,3,4,5-tetrahydrodipicolinate + NADH + H(+). It carries out the reaction (S)-2,3,4,5-tetrahydrodipicolinate + NADP(+) + H2O = (2S,4S)-4-hydroxy-2,3,4,5-tetrahydrodipicolinate + NADPH + H(+). Its pathway is amino-acid biosynthesis; L-lysine biosynthesis via DAP pathway; (S)-tetrahydrodipicolinate from L-aspartate: step 4/4. Its function is as follows. Catalyzes the conversion of 4-hydroxy-tetrahydrodipicolinate (HTPA) to tetrahydrodipicolinate. The chain is 4-hydroxy-tetrahydrodipicolinate reductase from Rhodopseudomonas palustris (strain BisB5).